A 252-amino-acid chain; its full sequence is Auxin-induced in root cultures protein 12 (252 aa).

The first 25 residues, 1-25, serve as a signal peptide directing secretion; sequence MASSSSSLLILAVACFVSLISPAIS. One can recognise a DOMON domain in the interval 49 to 165; the sequence is LNSYLHYTYN…DSVNQVWQIG (117 aa). N-linked (GlcNAc...) asparagine glycosylation is found at asparagine 58 and asparagine 61. A heme-binding site is contributed by methionine 91. 2 N-linked (GlcNAc...) asparagine glycosylation sites follow: asparagine 114 and asparagine 167. Histidine 176 contacts heme. Positions 193–224 are disordered; the sequence is EDAAPGSAPSPGSAPAPGTSGSTTPGTAAGGP. The span at 195–219 shows a compositional bias: low complexity; the sequence is AAPGSAPSPGSAPAPGTSGSTTPGT. The GPI-anchor amidated asparagine moiety is linked to residue asparagine 226. The propeptide at 227–252 is removed in mature form; sequence AGSLTRNVNFGVNLGILVLLGSIFIF.

Requires heme as cofactor.

The protein resides in the cell membrane. In terms of biological role, one-heme-containing cytochrome. In Arabidopsis thaliana (Mouse-ear cress), this protein is Auxin-induced in root cultures protein 12 (AIR12).